The primary structure comprises 446 residues: Deoxyguanosinetriphosphate triphosphohydrolase-like protein (446 aa).

Positions 1–28 are disordered; that stretch reads MSSSVWQERRHGEDKQRRNDHRSPFQRD. The segment covering 7-28 has biased composition (basic and acidic residues); that stretch reads QERRHGEDKQRRNDHRSPFQRD. In terms of domain architecture, HD spans 59 to 252; sequence RLTHSLEVSQ…MELADDIAYA (194 aa).

This sequence belongs to the dGTPase family. Type 2 subfamily.

This chain is Deoxyguanosinetriphosphate triphosphohydrolase-like protein, found in Shewanella sp. (strain MR-4).